Reading from the N-terminus, the 330-residue chain is Zinc finger protein Gfi-1b (330 aa).

The interval 1–20 (MPRSFLVKSKKAHTYHQPRV) is SNAG domain. Residues 1 to 42 (MPRSFLVKSKKAHTYHQPRVQEDEPLWPPALTPVPRDQAPSN) are disordered. The residue at position 8 (K8) is an N6,N6-dimethyllysine. The segment at 91–330 (GDSPLSDSPP…RHRESQHNLK (240 aa)) is interaction with ARIH2. C2H2-type zinc fingers lie at residues 163 to 186 (YHCV…RRSH), 192 to 214 (FACD…THVH), 220 to 242 (FECR…LLIH), 248 to 270 (YPCQ…TYIH), 276 to 298 (HKCQ…SRKH), and 304 to 327 (FSCE…ESQH). The interval 164–330 (HCVKCNKVFS…RHRESQHNLK (167 aa)) is mediates interaction with GATA1.

Component of a RCOR-GFI-KDM1A-HDAC complex. Interacts directly with RCOR1, KDM1A and HDAC2. Forms a complex with GATA1. Interacts with histone methyltransferases EHMT2 and SUV39H1. Interacts with ARIH2 (via RING-type 2). Interacts with RUNX1T1. Methylation at Lys-8 in the SNAG domain seems required for the recruitment of the corepressor complex. As to expression, expressed in bone marrow and fetal liver, but also detectable in fetal spleen, fetal thymus, and testes. Detected in hematopoietic stem cells, erythroblasts, and megakaryocytes. Overexpressed in bone marrow of patients with erythroleukemia and megakaryocytic leukemia as well as in their corresponding leukemic cell lines, and markedly repressed in severe aplastic anemia (SAA).

It is found in the nucleus. In terms of biological role, essential proto-oncogenic transcriptional regulator necessary for development and differentiation of erythroid and megakaryocytic lineages. Component of a RCOR-GFI-KDM1A-HDAC complex that suppresses, via histone deacetylase (HDAC) recruitment, a number of genes implicated in multilineage blood cell development and controls hematopoietic differentiation. Transcriptional repressor or activator depending on both promoter and cell type context; represses promoter activity of SOCS1 and SOCS3 and thus, may regulate cytokine signaling pathways. Cooperates with GATA1 to repress target gene transcription, such as the apoptosis regulator BCL2L1; GFI1B silencing in leukemic cell lines markedly increase apoptosis rate. Inhibits down-regulation of MYC and MYB as well as the cyclin-dependent kinase inhibitor CDKN1A/P21WAF1 in IL6-treated myelomonocytic cells. Represses expression of GATA3 in T-cell lymphomas and inhibits GATA1-mediated transcription; as GATA1 also mediates erythroid GFI1B transcription, both GATA1 and GFI1B participate in a feedback regulatory pathway controlling the expression of GFI1B gene in erythroid cells. Suppresses GATA1-mediated stimulation of GFI1B promoter through protein interaction. Binds to gamma-satellite DNA and to its own promoter, auto-repressing its own expression. Alters histone methylation by recruiting histone methyltransferase to target genes promoters. Plays a role in heterochromatin formation. The polypeptide is Zinc finger protein Gfi-1b (GFI1B) (Homo sapiens (Human)).